A 254-amino-acid polypeptide reads, in one-letter code: Long form salivary protein D7LC (254 aa).

The N-terminal stretch at 1 to 19 (MNAVITSLLFLSLVGLGYS) is a signal peptide. Intrachain disulfides connect cysteine 36-cysteine 66 and cysteine 62-cysteine 112. Tryptophan 49 contributes to the thromboxane A2 binding site. Leukotriene C4 is bound at residue tryptophan 52. Tyrosine 63 is a binding site for thromboxane A2. Leukotriene C4 is bound by residues glycine 136 and lysine 154. Thromboxane A2 is bound at residue lysine 154. Intrachain disulfides connect cysteine 162–cysteine 178, cysteine 174–cysteine 221, and cysteine 211–cysteine 230.

The protein belongs to the PBP/GOBP family.

Its subcellular location is the secreted. Functionally, modulates blood feeding of female sandflies on vertebrate species by binding and sequestering different mediators involved in the host response. Binds leukotriene C4, leukotriene D4, leukotriene E4 and U-46619, a stable analog of thromboxane A2. Does not bind histamine or serotonin. Inhibits platelet aggregation induced by low concentrations of collagen in thromboxane A2-dependent manner. This chain is Long form salivary protein D7LC, found in Phlebotomus papatasi (Sandfly).